Consider the following 898-residue polypeptide: Protein kintoun (898 aa).

Disordered stretches follow at residues 558 to 680 and 765 to 822; these read GELK…VESD and ILGQ…SGIS. Positions 575–602 are enriched in basic and acidic residues; that stretch reads INTRTVEDDTKVAKENVKKVDQETAHEG. The segment covering 603–616 has biased composition (basic residues); the sequence is KKSKKNQRRKNKKR. The span at 641–656 shows a compositional bias: polar residues; it reads NEANSFEGTGSSSEAT.

The protein belongs to the PIH1 family. Kintoun subfamily.

The protein resides in the cytoplasm. Functionally, required for cytoplasmic pre-assembly of axonemal dyneins, thereby playing a central role in motility in cilia and flagella. Involved in pre-assembly of dynein arm complexes in the cytoplasm before intraflagellar transport loads them for the ciliary compartment. The sequence is that of Protein kintoun from Aedes aegypti (Yellowfever mosquito).